The sequence spans 634 residues: Chaperone protein HtpG (634 aa).

Residues methionine 1–arginine 342 form an a; substrate-binding region. The b stretch occupies residues glutamate 343 to glutamine 559. The c stretch occupies residues leucine 560–alanine 634.

This sequence belongs to the heat shock protein 90 family. Homodimer.

It is found in the cytoplasm. Its function is as follows. Molecular chaperone. Has ATPase activity. This chain is Chaperone protein HtpG, found in Xanthomonas campestris pv. campestris (strain 8004).